The primary structure comprises 341 residues: Cysteine and histidine-rich domain-containing protein 1 (341 aa).

Residues Cys5, Cys10, Cys24, His27, Cys42, Cys43, Cys59, His64, Cys155, Cys160, Cys174, His177, Cys192, Cys193, Cys209, and His214 each coordinate Zn(2+). CHORD domains follow at residues 5-64 and 155-214; these read CYNK…KGPH and CKNG…RGKH. The interval 61–81 is disordered; it reads KGPHNQEKPAEPVKPEVKSSL. Basic and acidic residues predominate over residues 64–81; sequence HNQEKPAEPVKPEVKSSL. Positions 225–314 constitute a CS domain; sequence VVPCRFDWHQ…AEPMSWARLD (90 aa). The segment at 313-341 is disordered; that stretch reads LDLPPVAPPKEKEKEKDVDSEDECDDDED. The span at 330-341 shows a compositional bias: acidic residues; that stretch reads VDSEDECDDDED.

Functionally, regulates centrosome duplication. This Danio rerio (Zebrafish) protein is Cysteine and histidine-rich domain-containing protein 1 (chordc1).